A 450-amino-acid polypeptide reads, in one-letter code: Exodeoxyribonuclease 7 large subunit (450 aa).

The protein belongs to the XseA family. In terms of assembly, heterooligomer composed of large and small subunits.

It is found in the cytoplasm. It catalyses the reaction Exonucleolytic cleavage in either 5'- to 3'- or 3'- to 5'-direction to yield nucleoside 5'-phosphates.. Functionally, bidirectionally degrades single-stranded DNA into large acid-insoluble oligonucleotides, which are then degraded further into small acid-soluble oligonucleotides. The protein is Exodeoxyribonuclease 7 large subunit of Shewanella frigidimarina (strain NCIMB 400).